The following is a 554-amino-acid chain: Cytochrome P450 monooxygenase himC (554 aa).

The helical transmembrane segment at 52 to 72 (YSVASVAIAGFTALVVSVALY) threads the bilayer. N110, N328, N414, and N425 each carry an N-linked (GlcNAc...) asparagine glycan. Position 501 (C501) interacts with heme.

The protein belongs to the cytochrome P450 family. The cofactor is heme.

The protein localises to the membrane. Its pathway is secondary metabolite biosynthesis. Its function is as follows. Cytochrome P450 monooxygenase; part of the him gene cluster that mediates the biosynthesis of himeic acid A, a ubiquitin-activating enzyme (E1) inhibitor. First, himA, together with the trans-enoyl reductase himH, catalyzes the formation of apolyketide chain, which is then condensed with leucine by the NRPS activity of himA. Dieckmann cyclization and release from himA gives a tetramic acid intermediate as the product of himA PKS-NRPS. HimG then catalyzes alpha-oxidation of the tetramic acid ring, with a subsequent rearrangement to yield apyrone intermediate. Two terminal methyl groups of polyketide and amide side chains are oxidized to carboxylic acids by himC cytochrome P450 monooxygenase to form himeic acid A. Himeic acid A is further converted to himeic acid B and C during culture growth. No gene responsible for pyrone to pyridone conversion was found in the him gene cluster and himeic acid A is non-enzymatically converted to himeic acid C by the incorporation of an ammonium nitrogen atom in a pH5 buffer, and to himeic acid B at a conversion ratio of 50% during incubation in MeOH for 5 days. The polypeptide is Cytochrome P450 monooxygenase himC (Aspergillus japonicus).